The sequence spans 246 residues: UDP-N-acetyl-D-mannosaminuronic acid transferase (246 aa).

Belongs to the glycosyltransferase 26 family.

The enzyme catalyses UDP-N-acetyl-alpha-D-mannosaminouronate + N-acetyl-alpha-D-glucosaminyl-di-trans,octa-cis-undecaprenyl diphosphate = beta-D-ManNAcA-(1-&gt;4)-alpha-D-GlcNAc-di-trans,octa-cis-undecaprenyl diphosphate + UDP + H(+). The protein operates within bacterial outer membrane biogenesis; enterobacterial common antigen biosynthesis. Catalyzes the synthesis of Und-PP-GlcNAc-ManNAcA (Lipid II), the second lipid-linked intermediate involved in enterobacterial common antigen (ECA) synthesis. The sequence is that of UDP-N-acetyl-D-mannosaminuronic acid transferase from Salmonella choleraesuis (strain SC-B67).